The chain runs to 104 residues: Large ribosomal subunit protein bL21 (104 aa).

It belongs to the bacterial ribosomal protein bL21 family. As to quaternary structure, part of the 50S ribosomal subunit. Contacts protein L20.

Its function is as follows. This protein binds to 23S rRNA in the presence of protein L20. The sequence is that of Large ribosomal subunit protein bL21 from Thermotoga sp. (strain RQ2).